The chain runs to 376 residues: Probable ribonucleoside-diphosphate reductase small subunit 048L (376 aa).

Positions 110, 140, and 143 each coordinate Fe cation. The active site involves Tyr147. Fe cation-binding residues include Glu217, Glu251, and His254.

Belongs to the ribonucleoside diphosphate reductase small chain family. As to quaternary structure, heterotetramer composed of a homodimer of the large subunit (R1) and a homodimer of the small subunit (R2). Larger multisubunit protein complex are also active, composed of (R1)n(R2)n. Fe cation is required as a cofactor.

It carries out the reaction a 2'-deoxyribonucleoside 5'-diphosphate + [thioredoxin]-disulfide + H2O = a ribonucleoside 5'-diphosphate + [thioredoxin]-dithiol. Ribonucleoside-diphosphate reductase holoenzyme provides the precursors necessary for viral DNA synthesis. Allows virus growth in non-dividing cells. Catalyzes the biosynthesis of deoxyribonucleotides from the corresponding ribonucleotides. The chain is Probable ribonucleoside-diphosphate reductase small subunit 048L from Invertebrate iridescent virus 3 (IIV-3).